Consider the following 439-residue polypeptide: Putative phosphatidate cytidylyltransferase (439 aa).

Positions 1-37 are disordered; sequence MARKRTNKRNNSDKENGNVGVVQNKDSASSKTTEPAR. At S12 the chain carries Phosphoserine. The segment covering 24–33 has biased composition (polar residues); it reads NKDSASSKTT. 7 consecutive transmembrane segments (helical) span residues 52-71, 76-98, 110-130, 145-165, 180-199, 245-265, and 321-341; these read FITR…TALA, WVVL…IASV, FINW…SIYA, LVLH…VLFV, FCWT…FMIN, GFLG…YVLM, and FHLA…GFFA.

Belongs to the CDS family. It depends on Mg(2+) as a cofactor.

Its subcellular location is the endoplasmic reticulum membrane. The catalysed reaction is a 1,2-diacyl-sn-glycero-3-phosphate + CTP + H(+) = a CDP-1,2-diacyl-sn-glycerol + diphosphate. The protein operates within phospholipid metabolism; CDP-diacylglycerol biosynthesis; CDP-diacylglycerol from sn-glycerol 3-phosphate: step 3/3. Functionally, supplies CDP-diacylglycerol, which may play an important role as both a precursor to phosphoinositide biosynthesis in the plasma membrane and as a negative effector of phosphatidylinositol 4-kinase activity, thereby exerting an effect on cell proliferation via a lipid-dependent signal transduction cascade. In Schizosaccharomyces pombe (strain 972 / ATCC 24843) (Fission yeast), this protein is Putative phosphatidate cytidylyltransferase.